The sequence spans 163 residues: 3-isopropylmalate dehydratase small subunit (163 aa).

This sequence belongs to the LeuD family. LeuD type 2 subfamily. Heterodimer of LeuC and LeuD.

It carries out the reaction (2R,3S)-3-isopropylmalate = (2S)-2-isopropylmalate. Its pathway is amino-acid biosynthesis; L-leucine biosynthesis; L-leucine from 3-methyl-2-oxobutanoate: step 2/4. In terms of biological role, catalyzes the isomerization between 2-isopropylmalate and 3-isopropylmalate, via the formation of 2-isopropylmaleate. The protein is 3-isopropylmalate dehydratase small subunit of Ruminiclostridium cellulolyticum (strain ATCC 35319 / DSM 5812 / JCM 6584 / H10) (Clostridium cellulolyticum).